Consider the following 208-residue polypeptide: Calcyphosin-like protein (208 aa).

4 consecutive EF-hand domains span residues 39–74 (AGIKGLGRVFRIMDDDNNRTLDFKEFMKGLNDYAVV), 75–110 (MEKEEVEELFRRFDKDGNGTIDFNEFLLTLRPPMSR), 111–146 (ARKEVIMQAFRKLDKTGDGVITIEDLREVYNAKHHP), and 154–191 (SEEQVFRKFLDNFDSPYDKDGLVTPEEFMNYYAGVSAS). The Ca(2+) site is built by aspartate 52, aspartate 54, asparagine 56, threonine 58, glutamate 63, aspartate 88, aspartate 90, asparagine 92, threonine 94, and glutamate 99.

It localises to the cytoplasm. The protein is Calcyphosin-like protein (CAPSL) of Homo sapiens (Human).